Here is a 99-residue protein sequence, read N- to C-terminus: UPF0235 protein Avin_03050 (99 aa).

Residues 66-99 (VSLESGESNRQKRVRIRRPRQLPALPGLAPRPDA) are disordered. Positions 76-85 (QKRVRIRRPR) are enriched in basic residues.

It belongs to the UPF0235 family.

This is UPF0235 protein Avin_03050 from Azotobacter vinelandii (strain DJ / ATCC BAA-1303).